A 392-amino-acid chain; its full sequence is GDP-mannose transporter (392 aa).

Residues 1 to 40 (MANKRNEDIELGPAEGRGSTDKDPFLARRSSSQPNRPQQA) are disordered. Residues 1–55 (MANKRNEDIELGPAEGRGSTDKDPFLARRSSSQPNRPQQAGPFGGYFDKIDHSPG) lie on the Cytoplasmic side of the membrane. Residues 29–38 (RSSSQPNRPQ) are compositionally biased toward polar residues. Residues 56-76 (ASIIAYCLSSISMTVVNKYVV) form a helical membrane-spanning segment. Topologically, residues 77 to 80 (SGSE) are lumenal. The chain crosses the membrane as a helical span at residues 81–101 (WNLNFFYLAVQSLVCTAAILI). At 102–121 (CKQLGMFQNLAAFDSTKAKK) the chain is on the cytoplasmic side. A helical transmembrane segment spans residues 122–144 (WFPISLLLVGMIYTSTKALQFLS). The Lumenal segment spans residues 145–149 (VPVYT). The chain crosses the membrane as a helical span at residues 150–168 (IFKNLTIIVVAYGEVLWFG). Over 169-174 (GSVTPM) the chain is Cytoplasmic. The helical transmembrane segment at 175–198 (ALLSFGLMVLSSVIAAWADIQAAV) threads the bilayer. Residues 199–213 (EGVGHTAEATDAIST) lie on the Lumenal side of the membrane. A helical membrane pass occupies residues 214-234 (LNAGYAWMGMNVFCTAAYLLG). Over 235–248 (MRKVIKKMNFKDYD) the chain is Cytoplasmic. The chain crosses the membrane as a helical span at residues 249–269 (TMFYNNLLTIPVLIVFSLLFE). Residues 270-287 (DWSNDNLIKNFPVETRNS) are Lumenal-facing. The helical transmembrane segment at 288-308 (LFIGMIYSGLAAIFISYCSAW) threads the bilayer. Residues 309-316 (CIRVTSST) lie on the Cytoplasmic side of the membrane. Residues 317-337 (TYSMVGALNKLPLAISGLIFF) traverse the membrane as a helical segment. Residues 338–342 (DAPVT) are Lumenal-facing. The chain crosses the membrane as a helical span at residues 343-361 (FGSVTAIFVGFVSGLVYTW). The Cytoplasmic portion of the chain corresponds to 362–392 (SKTRQKVSQILPTTQPTMSASAASNRDAANA).

Belongs to the TPT transporter family. SLC35D subfamily. In terms of assembly, homooligomer.

Its subcellular location is the golgi apparatus membrane. The protein resides in the cytoplasmic vesicle membrane. It is found in the endoplasmic reticulum membrane. Functionally, involved in the import of GDP-mannose from the cytoplasm into the Golgi lumen. The protein is GDP-mannose transporter (vrg-4) of Neurospora crassa (strain ATCC 24698 / 74-OR23-1A / CBS 708.71 / DSM 1257 / FGSC 987).